Here is a 192-residue protein sequence, read N- to C-terminus: Protein SHORT HYPOCOTYL IN WHITE LIGHT 1 (192 aa).

The short motif at 43-50 (FRRLNRSL) is the Nuclear localization signal element. A disordered region spans residues 70 to 92 (GGDNYDVVPDDDGFSDDDDEEDE). The segment covering 77 to 92 (VPDDDGFSDDDDEEDE) has biased composition (acidic residues). Transmembrane regions (helical) follow at residues 122-142 (ILPAAMSPRLVSFAVDGILLL) and 159-179 (GGTVFTVILLIRLFWAAASFF).

In terms of assembly, interacts with HY5 and COP1 in the nucleus. As to expression, expressed in young seedlings (e.g. hypocotyl and cotyledons) and in green tissues (e.g. leaves, stems, sepals, and young siliques).

It is found in the nucleus membrane. Its function is as follows. Negative regulator of photomorphogenesis modulating both light and abscisic acid (ABA) signaling pathways. Negatively regulates the light-mediated inhibition of hypocotyl elongation, probably in a PHYB-mediated signaling pathway, but promotes flowering time (especially in long days) and lateral root formation. Enhances light-regulated gene expression. Promotes COP1-mediated degradation of HY5 during seedling development (e.g. hypocotyl growth) through enhanced ubiquitination in the darkness. Also involved in root gravitropism. The polypeptide is Protein SHORT HYPOCOTYL IN WHITE LIGHT 1 (Arabidopsis thaliana (Mouse-ear cress)).